The following is a 65-amino-acid chain: Disintegrin CC8A (65 aa).

A Disintegrin domain is found at 1–65; sequence MNSAHPCCDP…SDCPRNRIKK (65 aa). Intrachain disulfides connect Cys7–Cys30, Cys21–Cys27, Cys26–Cys51, and Cys39–Cys58. Positions 43-45 match the Cell attachment site motif; sequence RGD.

This sequence belongs to the disintegrin family. Dimeric disintegrin subfamily. In terms of assembly, heterodimer with CC8B; disulfide-linked. Expressed by the venom gland.

The protein localises to the secreted. Inhibits integrins alpha-IIb/beta-3 (ITGA2B/ITGB3), alpha-V/beta-3 (ITGAV/ITGB3), and alpha-5/beta-1 (ITGA5/ITGB1). The sequence is that of Disintegrin CC8A from Cerastes cerastes (Horned desert viper).